The primary structure comprises 119 residues: Protein phosphatase EYA4 (119 aa).

It belongs to the HAD-like hydrolase superfamily. EYA family. The cofactor is Mg(2+).

It is found in the cytoplasm. Its subcellular location is the nucleus. The enzyme catalyses O-phospho-L-tyrosyl-[protein] + H2O = L-tyrosyl-[protein] + phosphate. In terms of biological role, tyrosine phosphatase that specifically dephosphorylates 'Tyr-142' of histone H2AX (H2AXY142ph). 'Tyr-142' phosphorylation of histone H2AX plays a central role in DNA repair and acts as a mark that distinguishes between apoptotic and repair responses to genotoxic stress. Promotes efficient DNA repair by dephosphorylating H2AX, promoting the recruitment of DNA repair complexes containing MDC1. Its function as histone phosphatase probably explains its role in transcription regulation during organogenesis. May be involved in development of the eye. In Gallus gallus (Chicken), this protein is Protein phosphatase EYA4 (EYA4).